Reading from the N-terminus, the 961-residue chain is Alanine--tRNA ligase, chloroplastic/mitochondrial (961 aa).

Positions 641, 645, 743, and 747 each coordinate Zn(2+).

The protein belongs to the class-II aminoacyl-tRNA synthetase family. Monomer. The cofactor is Zn(2+).

The protein resides in the plastid. It is found in the chloroplast. It localises to the mitochondrion. It carries out the reaction tRNA(Ala) + L-alanine + ATP = L-alanyl-tRNA(Ala) + AMP + diphosphate. Catalyzes the attachment of alanine to tRNA(Ala) in a two-step reaction: alanine is first activated by ATP to form Ala-AMP and then transferred to the acceptor end of tRNA(Ala). Also edits incorrectly charged tRNA(Ala) via its editing domain. This Sorghum bicolor (Sorghum) protein is Alanine--tRNA ligase, chloroplastic/mitochondrial.